We begin with the raw amino-acid sequence, 233 residues long: Orotidine 5'-phosphate decarboxylase (233 aa).

Residues D13, K35, 62–71 (DLKFHDIPNT), T122, R182, Q191, G211, and R212 each bind substrate. The active-site Proton donor is the K64.

The protein belongs to the OMP decarboxylase family. Type 1 subfamily. Homodimer.

The catalysed reaction is orotidine 5'-phosphate + H(+) = UMP + CO2. The protein operates within pyrimidine metabolism; UMP biosynthesis via de novo pathway; UMP from orotate: step 2/2. Functionally, catalyzes the decarboxylation of orotidine 5'-monophosphate (OMP) to uridine 5'-monophosphate (UMP). The polypeptide is Orotidine 5'-phosphate decarboxylase (Pseudomonas fluorescens (strain ATCC BAA-477 / NRRL B-23932 / Pf-5)).